The following is a 493-amino-acid chain: BICD family-like cargo adapter 2 (493 aa).

Coiled-coil stretches lie at residues glutamate 56–methionine 275 and methionine 365–threonine 431.

It belongs to the BICDR family.

The protein is BICD family-like cargo adapter 2 (bicdl2) of Xenopus laevis (African clawed frog).